We begin with the raw amino-acid sequence, 321 residues long: Cathepsin O (321 aa).

Positions 1-23 are cleaved as a signal peptide; that stretch reads MDVRALPWLPWLLWLLCRGGGDA. Positions 24–107 are cleaved as a propeptide — activation peptide; the sequence is DSRAPFTPTW…EVHMSIPNVS (84 aa). N-linked (GlcNAc...) asparagine glycosylation is found at Asn-62 and Asn-105. Disulfide bonds link Cys-129–Cys-170, Cys-163–Cys-204, and Cys-262–Cys-310. Cys-132 is an active-site residue. Residues His-269 and Asn-289 contribute to the active site.

Belongs to the peptidase C1 family. In terms of tissue distribution, expressed in all tissues examined. High levels seen in the ovary, kidney and placenta while low levels seen in thymus and skeletal muscle.

It is found in the lysosome. The enzyme catalyses The recombinant human enzyme hydrolyzes synthetic endopeptidase substrates including Z-Phe-Arg-NHMec and Z-Arg-Arg-NHMec.. Proteolytic enzyme possibly involved in normal cellular protein degradation and turnover. This chain is Cathepsin O (CTSO), found in Homo sapiens (Human).